The sequence spans 193 residues: 7-methyl-GTP pyrophosphatase (193 aa).

Asp70 serves as the catalytic Proton acceptor.

It belongs to the Maf family. YceF subfamily. The cofactor is a divalent metal cation.

Its subcellular location is the cytoplasm. It catalyses the reaction N(7)-methyl-GTP + H2O = N(7)-methyl-GMP + diphosphate + H(+). Functionally, nucleoside triphosphate pyrophosphatase that hydrolyzes 7-methyl-GTP (m(7)GTP). May have a dual role in cell division arrest and in preventing the incorporation of modified nucleotides into cellular nucleic acids. The chain is 7-methyl-GTP pyrophosphatase from Vibrio cholerae serotype O1 (strain ATCC 39315 / El Tor Inaba N16961).